The primary structure comprises 496 residues: Probable cytosol aminopeptidase (496 aa).

Residues Lys-266 and Asp-271 each coordinate Mn(2+). Lys-278 is a catalytic residue. Mn(2+)-binding residues include Asp-289, Asp-348, and Glu-350. Residue Arg-352 is part of the active site.

Belongs to the peptidase M17 family. It depends on Mn(2+) as a cofactor.

The protein resides in the cytoplasm. It carries out the reaction Release of an N-terminal amino acid, Xaa-|-Yaa-, in which Xaa is preferably Leu, but may be other amino acids including Pro although not Arg or Lys, and Yaa may be Pro. Amino acid amides and methyl esters are also readily hydrolyzed, but rates on arylamides are exceedingly low.. It catalyses the reaction Release of an N-terminal amino acid, preferentially leucine, but not glutamic or aspartic acids.. Functionally, presumably involved in the processing and regular turnover of intracellular proteins. Catalyzes the removal of unsubstituted N-terminal amino acids from various peptides. This chain is Probable cytosol aminopeptidase, found in Pseudomonas fluorescens (strain SBW25).